A 1138-amino-acid polypeptide reads, in one-letter code: Myelin regulatory factor (1138 aa).

Residues 1-768 (MEVVDETEAL…CISQRFLQGT (768 aa)) are Cytoplasmic-facing. Disordered stretches follow at residues 56–150 (TASF…YSPQ), 171–200 (VSSRLEHPPPPPAHLPGPPPPPPPPPHYPV), 246–267 (AELPPHPSKKRKHSESPPNTLN), and 279–339 (PGTV…SDSL). Low complexity predominate over residues 67 to 88 (PGSSGLHHLSPPGSGPSPGRHG). Lysine 123 carries the N6-acetyllysine modification. Residues 178–198 (PPPPPAHLPGPPPPPPPPPHY) show a composition bias toward pro residues. The segment at residues 250 to 541 (PHPSKKRKHS…SNPGQFESDS (292 aa)) is a DNA-binding region (NDT80). The short motif at 254–257 (KKRK) is the Nuclear localization signal element. Over residues 286 to 302 (PPHPARAPSPPWPPQGP) the composition is skewed to pro residues. A compositionally biased stretch (low complexity) spans 329–339 (SPGLLQDSDSL). Residues 491 to 494 (KKGK) carry the Nuclear localization signal motif. One can recognise a Peptidase S74 domain in the interval 587–696 (SDLRAKEHVQ…KLTDNLETRI (110 aa)). The stretch at 680–711 (GAVKELCKLTDNLETRIDELERWSHKLAKLRR) forms a coiled coil. A compositionally biased stretch (polar residues) spans 721–733 (SGAFSHAGSQFSR). Residues 721 to 753 (SGAFSHAGSQFSRAGSVPHKKRPPKLANKSSPA) form a disordered region. The required for interaction with TMEM98 stretch occupies residues 765 to 1003 (LQGTIIALVV…QGQLDPAPSL (239 aa)). Residues 769 to 789 (IIALVVVMAFSVVSMSTLYVL) traverse the membrane as a helical segment. Residues 790 to 1138 (SLRSEEDLVD…YYFHFYRLCD (349 aa)) are Lumenal-facing. Residues 891–900 (ATDPALGPTL) are compositionally biased toward low complexity. 2 disordered regions span residues 891-922 (ATDPALGPTLTPTPSPSSNPKHSGPGQMAPLP) and 951-999 (ASPV…QLDP). Composition is skewed to polar residues over residues 961-974 (QSKTKNSPSFNLQS) and 987-999 (PAQFTQTQGQLDP). Residues asparagine 1030, asparagine 1052, and asparagine 1116 are each glycosylated (N-linked (GlcNAc...) asparagine).

It belongs to the MRF family. In terms of assembly, homotrimer. Interacts (via C-terminal region) with TMEM98; the interaction inhibits MYRF self-cleavage. In terms of processing, glycosylated. Post-translationally, follows autocatalytic cleavage via the peptidase S74 domain. Autoprocessing is apparently constitutive and is essential for transcriptional activity. Autocatalytic cleavage is inhibited by interaction with TMEM98. As to expression, specifically expressed by postmitotic oligodendrocytes in the CNS. Not detected in the peripheral nervous system (PNS).

Its subcellular location is the endoplasmic reticulum membrane. The protein localises to the nucleus. It is found in the cytoplasm. Constitutes a precursor of the transcription factor. Mediates the autocatalytic cleavage that releases the Myelin regulatory factor, N-terminal component that specifically activates transcription of central nervous system (CNS) myelin genes. Its function is as follows. Membrane-bound part that has no transcription factor activity and remains attached to the endoplasmic reticulum membrane following cleavage. Functionally, transcription factor that specifically activates expression of myelin genes such as MBP, MOG, MAG, DUSP15 and PLP1 during oligodendrocyte (OL) maturation, thereby playing a central role in oligodendrocyte maturation and CNS myelination. Specifically recognizes and binds DNA sequence 5'-CTGGYAC-3' in the regulatory regions of myelin-specific genes and directly activates their expression. Not only required during oligodendrocyte differentiation but is also required on an ongoing basis for the maintenance of expression of myelin genes and for the maintenance of a mature, viable oligodendrocyte phenotype. The sequence is that of Myelin regulatory factor (Myrf) from Mus musculus (Mouse).